Consider the following 633-residue polypeptide: Pescadillo homolog (633 aa).

Positions 321–414 (RLRTLFKGLK…QLLPTNKYFL (94 aa)) constitute a BRCT domain. Disordered regions lie at residues 450-470 (HAQSEDESEDDAAAEEEDTVE) and 490-567 (KKYG…LQAR). 2 positions are modified to phosphoserine: Ser453 and Ser457. Acidic residues-rich tracts occupy residues 454-470 (EDESEDDAAAEEEDTVE) and 498-526 (VNEDEEDSDEEDFDGEEQESDDDDEEELD). Basic and acidic residues predominate over residues 527-538 (EKEKRLLEEKQK). Basic residues predominate over residues 545 to 554 (KVHKVNKRQV). A compositionally biased stretch (basic and acidic residues) spans 555 to 564 (HKAEVDEHRL). Residues 593 to 626 (LLRKKRRTIETDAKEAKKLAKREARKAAAAAAAA) are a coiled coil.

The protein belongs to the pescadillo family.

The protein resides in the nucleus. It localises to the nucleolus. The protein localises to the nucleoplasm. Its function is as follows. Required for maturation of ribosomal RNAs and formation of the large ribosomal subunit. This is Pescadillo homolog from Drosophila virilis (Fruit fly).